A 241-amino-acid polypeptide reads, in one-letter code: Chloride intracellular channel protein 1 (241 aa).

Ala-2 carries the post-translational modification N-acetylalanine. A required for insertion into the membrane region spans residues 2–90 (AEEQPQVELF…EEFLEAVLCP (89 aa)). At Lys-13 the chain carries N6-acetyllysine. The G-site signature appears at 24-27 (CPFS). Cys-24 and Cys-59 are disulfide-bonded. Residues 26 to 46 (FSQRLFMVLWLKGVTFNVTTV) traverse the membrane as a helical segment. Positions 93 to 233 (YPKLAALNPE…PDDEEIELAY (141 aa)) constitute a GST C-terminal domain. Lys-119 bears the N6-acetyllysine mark. Position 121 is a phosphoserine (Ser-121). Lys-131 bears the N6-acetyllysine mark. Phosphoserine is present on residues Ser-156 and Ser-211. Tyr-233 bears the Phosphotyrosine mark.

This sequence belongs to the chloride channel CLIC family. In terms of assembly, monomer. Homodimer (in vitro). Interacts with TRAPPC2. Dimerization requires a conformation change that leads to the exposure of a large hydrophobic surface. In vivo, this may lead to membrane insertion. In terms of tissue distribution, expressed in neonatal and adult cardiomyocytes (at protein level).

The protein localises to the nucleus. It localises to the nucleus membrane. Its subcellular location is the cytoplasm. It is found in the cell membrane. The protein resides in the endoplasmic reticulum. The catalysed reaction is L-dehydroascorbate + 2 glutathione = glutathione disulfide + L-ascorbate. It catalyses the reaction chloride(in) = chloride(out). It carries out the reaction iodide(out) = iodide(in). The enzyme catalyses thiocyanate(in) = thiocyanate(out). The catalysed reaction is nitrate(in) = nitrate(out). It catalyses the reaction bromide(in) = bromide(out). It carries out the reaction fluoride(in) = fluoride(out). In the soluble state, catalyzes glutaredoxin-like thiol disulfide exchange reactions with reduced glutathione as electron donor. Reduces selenite and dehydroascorbate and may act as an antioxidant during oxidative stress response. Can insert into membranes and form voltage-dependent multi-ion conductive channels. Membrane insertion seems to be redox-regulated and may occur only under oxidizing conditions. Involved in regulation of the cell cycle. The polypeptide is Chloride intracellular channel protein 1 (Rattus norvegicus (Rat)).